The following is a 192-amino-acid chain: Phosphomevalonate kinase (192 aa).

Residues 17 to 23 (KRKSGKD) and Arg-141 contribute to the ATP site. Residue Asn-170 participates in substrate binding. The ATP site is built by His-171 and Gln-180.

In terms of assembly, monomer.

The protein resides in the cytoplasm. It is found in the cytosol. It catalyses the reaction (R)-5-phosphomevalonate + ATP = (R)-5-diphosphomevalonate + ADP. It functions in the pathway isoprenoid biosynthesis; isopentenyl diphosphate biosynthesis via mevalonate pathway; isopentenyl diphosphate from (R)-mevalonate: step 2/3. In terms of biological role, catalyzes the reversible ATP-dependent phosphorylation of mevalonate 5-phosphate to produce mevalonate diphosphate and ADP, a key step in the mevalonic acid mediated biosynthesis of isopentenyl diphosphate and other polyisoprenoid metabolites. The protein is Phosphomevalonate kinase (PMVK) of Bos taurus (Bovine).